We begin with the raw amino-acid sequence, 678 residues long: MSPGPPAVGGVSPPVMVPGSAPPFQPTHQYFQHHYHQTPPGKLRDRSPRLSAEMRKNRDTATSSPASSGVSIQQRRGSTTQNSGVGSIGLPVLGGRGRGVMSDGHMQRTFHEAMRQRRTSLPANSLSLNGAKVTGSSLSEAKGLIADMLMNKELPGNVASCLRAVTMLLEQRPLPLNGLLNDFGLPSVVENPYGGESMVVGASKPRISNITFSTVTSATGLPTVPAEPNKARSSSYWKTEASPSNNNEHETPVDLLRKISVSRKESGTHVDTVVTTIDGQRYDTRELDTDPDLAETAVWSFPIFQMSRKHPQTILSRLTYNIFQQAELFRIFKVSPIKFFNFFHALEKGYWEIPYHNRIHAADVLHGCYYLSAHPVRSTFLTPKTPDSVLTPPHPHHQHSSIMSQLSTLELMALFTAAAMHDYDHPGRTNAFLVQVEDKKAILYNDRSVLENHHAAESWKLLNKPENHFIENLDPAEMKRFRYLVLEYILATDLKQHFEIIMTFTERLTEIDVQVETDRLLIGKLLIKMADINSPTKPYGLHRQWTDRICEEFYEQGDDERRRGLPITPYMDRGDAQVAKLQDSFIAHVVSPLATAMNECGLLPILPGLDTSELIINMEHNHRKWKEQIELENGGSYEAQITCNGGTAVNGVIEEESASTSDSPDPRRDSPLDSDLSQ.

3 disordered regions span residues 1–27 (MSPG…FQPT), 52–95 (AEMR…VLGG), and 223–250 (TVPA…NEHE). The span at 7–19 (AVGGVSPPVMVPG) shows a compositional bias: low complexity. Composition is skewed to polar residues over residues 60 to 85 (TATS…NSGV) and 231 to 246 (ARSS…PSNN). The PDEase domain maps to 281–632 (RYDTRELDTD…RKWKEQIELE (352 aa)). The active-site Proton donor is histidine 356. 4 residues coordinate a divalent metal cation: histidine 360, histidine 421, aspartate 422, and aspartate 531. The tract at residues 654 to 678 (EEESASTSDSPDPRRDSPLDSDLSQ) is disordered.

This sequence belongs to the cyclic nucleotide phosphodiesterase family. A divalent metal cation is required as a cofactor.

The catalysed reaction is a nucleoside 3',5'-cyclic phosphate + H2O = a nucleoside 5'-phosphate + H(+). The protein is Probable 3',5'-cyclic phosphodiesterase pde-3 (pde-3) of Caenorhabditis elegans.